We begin with the raw amino-acid sequence, 202 residues long: Acireductone dioxygenase (202 aa).

Residues H110, H112, E116, and H154 each coordinate Fe(2+). Ni(2+) contacts are provided by H110, H112, E116, and H154.

The protein belongs to the acireductone dioxygenase (ARD) family. As to quaternary structure, monomer. It depends on Fe(2+) as a cofactor. The cofactor is Ni(2+).

It catalyses the reaction 1,2-dihydroxy-5-(methylsulfanyl)pent-1-en-3-one + O2 = 3-(methylsulfanyl)propanoate + CO + formate + 2 H(+). It carries out the reaction 1,2-dihydroxy-5-(methylsulfanyl)pent-1-en-3-one + O2 = 4-methylsulfanyl-2-oxobutanoate + formate + 2 H(+). Its pathway is amino-acid biosynthesis; L-methionine biosynthesis via salvage pathway; L-methionine from S-methyl-5-thio-alpha-D-ribose 1-phosphate: step 5/6. Functionally, catalyzes 2 different reactions between oxygen and the acireductone 1,2-dihydroxy-3-keto-5-methylthiopentene (DHK-MTPene) depending upon the metal bound in the active site. Fe-containing acireductone dioxygenase (Fe-ARD) produces formate and 2-keto-4-methylthiobutyrate (KMTB), the alpha-ketoacid precursor of methionine in the methionine recycle pathway. Ni-containing acireductone dioxygenase (Ni-ARD) produces methylthiopropionate, carbon monoxide and formate, and does not lie on the methionine recycle pathway. This Synechococcus sp. (strain CC9311) protein is Acireductone dioxygenase.